The chain runs to 137 residues: ATP synthase epsilon chain (137 aa).

It belongs to the ATPase epsilon chain family. In terms of assembly, F-type ATPases have 2 components, CF(1) - the catalytic core - and CF(0) - the membrane proton channel. CF(1) has five subunits: alpha(3), beta(3), gamma(1), delta(1), epsilon(1). CF(0) has three main subunits: a, b and c.

It is found in the cell inner membrane. Functionally, produces ATP from ADP in the presence of a proton gradient across the membrane. This chain is ATP synthase epsilon chain, found in Yersinia pestis bv. Antiqua (strain Antiqua).